The sequence spans 289 residues: Oxaloacetate decarboxylase (289 aa).

Serine 50 contributes to the substrate binding site. A Mg(2+)-binding site is contributed by aspartate 88. Substrate contacts are provided by arginine 159 and histidine 235.

This sequence belongs to the isocitrate lyase family. Oxaloacetate decarboxylase subfamily. Homotetramer; dimer of dimers. The cofactor is Mg(2+).

The enzyme catalyses oxaloacetate + H(+) = pyruvate + CO2. Functionally, catalyzes the decarboxylation of oxaloacetate into pyruvate. Seems to play a role in maintaining cellular concentrations of bicarbonate and pyruvate. The sequence is that of Oxaloacetate decarboxylase from Pseudomonas fluorescens (strain SBW25).